We begin with the raw amino-acid sequence, 186 residues long: Adrenodoxin, mitochondrial (186 aa).

Residues 1–58 (MAARLLRVASAALGDTAGRWRLLARPRAGAGGLRGSRGPGLGGGAVATRTLSVSGRAQ) constitute a mitochondrion transit peptide. Ser61 is subject to Phosphoserine. At Lys64 the chain carries N6-acetyllysine; alternate. Lys64 carries the post-translational modification N6-succinyllysine; alternate. In terms of domain architecture, 2Fe-2S ferredoxin-type spans 65-169 (ITVHFINRDG…NMTVRVPDAV (105 aa)). [2Fe-2S] cluster-binding residues include Cys104, Cys110, Cys113, and Cys150. Residue Lys156 is modified to N6-succinyllysine. The residue at position 175 (Ser175) is a Phosphoserine.

This sequence belongs to the adrenodoxin/putidaredoxin family. As to quaternary structure, interacts with CYP11A1. Requires [2Fe-2S] cluster as cofactor. As to expression, detected in adrenal cortex and corpus luteum (at protein level).

The protein resides in the mitochondrion matrix. In terms of biological role, essential for the synthesis of various steroid hormones. Participates in the reduction of mitochondrial cytochrome P450 for steroidogenesis. Transfers electrons from adrenodoxin reductase to CYP11A1, a cytochrome P450 that catalyzes cholesterol side-chain cleavage to produce pregnenolone, the precursor of most steroid hormones. Does not form a ternary complex with adrenodoxin reductase and CYP11A1 but shuttles between the two enzymes to transfer electrons. The chain is Adrenodoxin, mitochondrial (FDX1) from Bos taurus (Bovine).